A 915-amino-acid chain; its full sequence is MNYKDTLLMPKTDFPMRGGLPKKEPEIQKQWDEQDLYHKILEKNKGHESYILHDGPPYANGNLHMGHALNKILKDFIVRYKSMQGYYSPYVPGWDTHGLPIEQALTKKGVKRKEMPISEFRKLCEEFALEQIDIQKKDFKRLGVNGDFNDPYITLKPEYEAAQIRLFGEMADRGLIYKGKKPVYWSPSSESSLAEAEIEYHDKRSPSIYVAFDVKDGKGVVDEDAKFIIWTTTPWTLPSNVAITVHPDLKYGQYNVNGEKYVVGQDLVEEVAEELGWDKEDIQLEKEFTGKELEYVETQHPFIDRVSLVINGLHVTTDAGTGAVHTAPGHGEDDYIVGQKYNLPVISPLNDKGVFTEEGGQFEGMFYDKANKAVTDLLKENGSLLKLKFITHSYPHDWRTKKPVIFRATPQWFASISKVRQDILDAIEDTNFKVDWGKTRIYNMIRDRGEWVISRQRVWGVPLPVFYTENGDIIMDKEVIYHVANLFEKYGSNVWFDRDAKDLLPEGFTHPGSPNGEFTKEEDIMDVWFDSGSSHRGVLETRPELSFPADLYLEGSDQYRGWFNSSITTAVATRGQSPYKFLLSHGFVMDGEGKKMSKSLGNVIVPDQIVKQKGADIARLWVSSVDYLSDVRISDEILKQTADVYRKIRNTLRFMLGNVNDFNPETDAVPESDLLEVDRYLLNRLREFTESIINHYDNFDYLNIYQEVQNFINVELSNFYLDYGKDILYIEKQDSHKRRSMQTVLYQILVDMTKLLAPILAHTSEEVWSYIPHVKEESVHLADMPEVVKPDEELLEKWNTFMKLRDDVNRALEEARNNKVIGKSLEAKVIIGSNESFDAADFLKDFENLHQLFIVSQVEVEEKVEDGNEYYYGDIKVVHADGEKCERCWNYSTELGSVNGLDHLCPRCQGVVADL.

Positions 57–67 (PYANGNLHMGH) match the 'HIGH' region motif. L-isoleucyl-5'-AMP is bound at residue E554. The short motif at 595–599 (KMSKS) is the 'KMSKS' region element. Residue K598 coordinates ATP. 4 residues coordinate Zn(2+): C885, C888, C905, and C908.

It belongs to the class-I aminoacyl-tRNA synthetase family. IleS type 1 subfamily. In terms of assembly, monomer. Zn(2+) is required as a cofactor.

The protein localises to the cytoplasm. The enzyme catalyses tRNA(Ile) + L-isoleucine + ATP = L-isoleucyl-tRNA(Ile) + AMP + diphosphate. In terms of biological role, catalyzes the attachment of isoleucine to tRNA(Ile). As IleRS can inadvertently accommodate and process structurally similar amino acids such as valine, to avoid such errors it has two additional distinct tRNA(Ile)-dependent editing activities. One activity is designated as 'pretransfer' editing and involves the hydrolysis of activated Val-AMP. The other activity is designated 'posttransfer' editing and involves deacylation of mischarged Val-tRNA(Ile). This is Isoleucine--tRNA ligase from Staphylococcus carnosus (strain TM300).